The primary structure comprises 880 residues: EP-cadherin (880 aa).

Residues 1–28 (MGSTRLRNASVWLCGLLCLLQVVPSINA) form the signal peptide. Positions 29–155 (DVSGCKPGFS…THTGLKRKKR (127 aa)) are excised as a propeptide. Asn-61 carries an N-linked (GlcNAc...) asparagine glycan. Cadherin domains are found at residues 156-263 (DWVI…RPKF), 264-376 (TQDV…APIF), 377-487 (DPKT…APFF), 488-593 (VPAV…DNGP), and 594-704 (VPSP…GFDL). Topologically, residues 156–703 (DWVIPPIKVS…CQEKLVGGFD (548 aa)) are extracellular. O-linked (GalNAc...) threonine glycans are attached at residues Thr-343, Thr-382, and Thr-400. Asn-425 is a glycosylation site (N-linked (GlcNAc...) asparagine). O-linked (GalNAc...) threonine glycans are attached at residues Thr-428, Thr-469, Thr-471, Thr-473, and Thr-475. An N-linked (GlcNAc...) asparagine glycan is attached at Asn-558. Residues Thr-562, Thr-576, Thr-578, and Thr-580 are each glycosylated (O-linked (GalNAc...) threonine). Intrachain disulfides connect Cys-603-Cys-687 and Cys-685-Cys-694. Asn-681 is a glycosylation site (N-linked (GlcNAc...) asparagine). A helical membrane pass occupies residues 704-728 (LPIILVILGSVLALLILFLLLLLFL). Residues 729-880 (KRKKVVKEPL…DMYGGDDDEE (152 aa)) are Cytoplasmic-facing. The disordered stretch occupies residues 790-826 (PAPHYRPRPSNPDEIGNFIDENLDAADNDPTAPPYDS).

Interacts with CTNNB1.

It is found in the cell membrane. In terms of biological role, cadherins are calcium-dependent cell adhesion proteins. They preferentially interact with themselves in a homophilic manner in connecting cells; cadherins may thus contribute to the sorting of heterogeneous cell types. The sequence is that of EP-cadherin from Xenopus laevis (African clawed frog).